The chain runs to 667 residues: UvrABC system protein B (667 aa).

In terms of domain architecture, Helicase ATP-binding spans 25 to 414 (TGLQRGDKHQ…GVVVEQIIRP (390 aa)). Residue 38–45 (GVTGSGKT) coordinates ATP. Residues 91-114 (YYDYYQPEAYVPTTDTFIEKDSSI) carry the Beta-hairpin motif. In terms of domain architecture, Helicase C-terminal spans 430–596 (QVDDLIHEIR…TVKKSLRSIL (167 aa)). The UVR domain maps to 624-659 (KNEIARVKEEMLAAAANLEFEKAAELRDRMLELDKL).

The protein belongs to the UvrB family. As to quaternary structure, forms a heterotetramer with UvrA during the search for lesions. Interacts with UvrC in an incision complex.

It localises to the cytoplasm. The UvrABC repair system catalyzes the recognition and processing of DNA lesions. A damage recognition complex composed of 2 UvrA and 2 UvrB subunits scans DNA for abnormalities. Upon binding of the UvrA(2)B(2) complex to a putative damaged site, the DNA wraps around one UvrB monomer. DNA wrap is dependent on ATP binding by UvrB and probably causes local melting of the DNA helix, facilitating insertion of UvrB beta-hairpin between the DNA strands. Then UvrB probes one DNA strand for the presence of a lesion. If a lesion is found the UvrA subunits dissociate and the UvrB-DNA preincision complex is formed. This complex is subsequently bound by UvrC and the second UvrB is released. If no lesion is found, the DNA wraps around the other UvrB subunit that will check the other stand for damage. This Syntrophotalea carbinolica (strain DSM 2380 / NBRC 103641 / GraBd1) (Pelobacter carbinolicus) protein is UvrABC system protein B.